The primary structure comprises 606 residues: Mitogen-activated protein kinase kinase kinase 7 (606 aa).

The tract at residues 1 to 300 (MSTASAASSS…FPGADEPLQY (300 aa)) is interaction with MAPK8IP1. A Protein kinase domain is found at 36–291 (IEVEEVVGRG…KIMTHLMRYF (256 aa)). Residues 42-50 (VGRGAFGVV) and lysine 63 each bind ATP. Residue lysine 72 forms a Glycyl lysine isopeptide (Lys-Gly) (interchain with G-Cter in ubiquitin) linkage. The Proton acceptor role is filled by aspartate 156. Lysine 158 is covalently cross-linked (Glycyl lysine isopeptide (Lys-Gly) (interchain with G-Cter in ubiquitin)). A phosphothreonine; by autocatalysis mark is found at threonine 184 and threonine 187. Serine 192 is modified (phosphoserine; by autocatalysis). Lysine 209 participates in a covalent cross-link: Glycyl lysine isopeptide (Lys-Gly) (interchain with G-Cter in ubiquitin). 2 disordered regions span residues 301–338 (PCQYSDEGQSNSATSTGSFMDIASTNTSNKSDTNMEQV) and 354–391 (KNQAKQQSESGRLSLGASRGSSVESLPPASEGKRMSAD). The span at 306-338 (DEGQSNSATSTGSFMDIASTNTSNKSDTNMEQV) shows a compositional bias: polar residues. Residues 361–375 (SESGRLSLGASRGSS) show a composition bias toward low complexity. Residues serine 367, serine 389, and serine 439 each carry the phosphoserine modification. Positions 443–452 (LTVTGTEPGQ) are enriched in polar residues. Residues 443–493 (LTVTGTEPGQVSSRSSSPSVRMITTSGPTSEKPTRSHPWTPDDSTDTNGSD) form a disordered region. A compositionally biased stretch (low complexity) spans 453-463 (VSSRSSSPSVR). Serine 455 is subject to Phosphoserine. A compositionally biased stretch (polar residues) spans 464 to 473 (MITTSGPTSE).

Belongs to the protein kinase superfamily. STE Ser/Thr protein kinase family. MAP kinase kinase kinase subfamily. In terms of assembly, can form homodimer. Binds both upstream activators and downstream substrates in multimolecular complexes. Interacts with TAB1/MAP3K7IP1, TAB2/MAP3K7IP2 and TAB3/MAP3K7IP3. Identified in the TRIKA2 complex composed of MAP3K7/TAK1, TAB1/MAP3K7IP1 and TAB2/MAP3K7IP2. Interacts with PPM1L and PPM1B/PP2CB. Interaction with PP2A and PPP6C leads to its repressed activity. Interacts with TRAF6 and TAB1/MAP3K7IP1; during IL-1 signaling. Interacts with TAOK1 and TAOK2; interaction with TAOK2 interferes with MAP3K7 interaction with IKKA, thus preventing NF-kappa-B activation. Interacts with DYNC2I2 (via WD domains). Interacts with CYLD and RBCK1. Interacts with TGFBR1; induces MAP3K7/TAK1 activation by TRAF6. Interacts with MAPK8IP1 and SMAD6. Interacts with isoform 1 of VRK2. Interacts with DAB2; the interaction is induced by TGF-beta stimulation and may mediate TGF-beta stimulated JNK activation. Interacts with TRIM5. Part of a complex containing ITCH, NDFIP1 and MAP3K7. Interacts with IFIT5; the interaction synergizes the recruitment of IKK to MAP3K7 and enhances IKK phosphorylation. Interacts with PLEKHM1 (via N- and C-terminus). Found in a complex with SH3RF1, RAC2, MAP2K7/MKK7, MAPK8IP1/JIP1, MAPK8/JNK1 and MAPK9/JNK2. Interacts with SASH1. Interacts with RIPK1. It depends on Mg(2+) as a cofactor. Association with TAB1/MAP3K7IP1 promotes autophosphorylation at Ser-192 and subsequent activation. Association with TAB2/MAP3K7IP2, itself associated with free unanchored Lys-63 polyubiquitin chain, promotes autophosphorylation and subsequent activation of MAP3K7. Dephosphorylation at Ser-192 by PPM1B/PP2CB and at Thr-187 by PP2A and PPP6C leads to inactivation. In terms of processing, 'Lys-48'-linked polyubiquitination at Lys-72 is induced by TNFalpha, and leads to proteasomal degradation. Undergoes 'Lys-48'-linked polyubiquitination catalyzed by ITCH. 'Lys-63'-linked polyubiquitination at Lys-158 by TRIM8 does not lead to proteasomal degradation but contributes to autophosphorylation and activation. Deubiquitinated by CYLD, a protease that selectively cleaves 'Lys-63'-linked ubiquitin chains. Deubiquitinated by USP19; leading to negative regulation of TNF-alpha- and IL-1beta-triggered NF-kappa-B activation.

Its subcellular location is the cytoplasm. It is found in the cell membrane. The enzyme catalyses L-seryl-[protein] + ATP = O-phospho-L-seryl-[protein] + ADP + H(+). It carries out the reaction L-threonyl-[protein] + ATP = O-phospho-L-threonyl-[protein] + ADP + H(+). With respect to regulation, activated by pro-inflammatory cytokines and in response to physical and chemical stresses, including osmotic stress, oxidative stress, arsenic and ultraviolet light irradiation. Activated by 'Lys-63'-linked polyubiquitination and by autophosphorylation. Association with TAB1/MAP3K7IP1 and TAB2/MAP3K7IP2 promotes activation through autophosphorylation, whereas PPM1B/PP2CB, PP2A and PPP6C dephosphorylation leads to inactivation. Ceramides are also able to activate MAP3K7/TAK1. Functionally, serine/threonine kinase which acts as an essential component of the MAP kinase signal transduction pathway. Plays an important role in the cascades of cellular responses evoked by changes in the environment. Mediates signal transduction of TRAF6, various cytokines including interleukin-1 (IL-1), transforming growth factor-beta (TGFB), TGFB-related factors like BMP2 and BMP4, toll-like receptors (TLR), tumor necrosis factor receptor CD40 and B-cell receptor (BCR). Once activated, acts as an upstream activator of the MKK/JNK signal transduction cascade and the p38 MAPK signal transduction cascade through the phosphorylation and activation of several MAP kinase kinases like MAP2K1/MEK1, MAP2K3/MKK3, MAP2K6/MKK6 and MAP2K7/MKK7. These MAP2Ks in turn activate p38 MAPKs and c-jun N-terminal kinases (JNKs); both p38 MAPK and JNK pathways control the transcription factors activator protein-1 (AP-1). Independently of MAP2Ks and p38 MAPKs, acts as a key activator of NF-kappa-B by promoting activation of the I-kappa-B-kinase (IKK) core complex. Mechanistically, recruited to polyubiquitin chains of RIPK2 and IKBKG/NEMO via TAB2/MAP3K7IP2 and TAB3/MAP3K7IP3, and catalyzes phosphorylation and activation of IKBKB/IKKB component of the IKK complex, leading to NF-kappa-B activation. In osmotic stress signaling, plays a major role in the activation of MAPK8/JNK1, but not that of NF-kappa-B. Promotes TRIM5 capsid-specific restriction activity. Phosphorylates RIPK1 at 'Ser-321' which positively regulates RIPK1 interaction with RIPK3 to promote necroptosis but negatively regulates RIPK1 kinase activity and its interaction with FADD to mediate apoptosis. Phosphorylates STING1 in response to cGAMP-activation, promoting association between STEEP1 and STING1 and STING1 translocation to COPII vesicles. This chain is Mitogen-activated protein kinase kinase kinase 7 (MAP3K7), found in Pongo abelii (Sumatran orangutan).